A 1816-amino-acid chain; its full sequence is Kinesin-like protein KIF1B (1816 aa).

Position 2 is an N-acetylserine (Ser-2). In terms of domain architecture, Kinesin motor spans 5–354 (SVKVAVRVRP…LRYADRAKQI (350 aa)). 97–104 (GQTGAGKS) contributes to the ATP binding site. The segment at 270-350 (NINKSLTTLG…TLSTLRYADR (81 aa)) is interaction with KIFBP. Coiled-coil stretches lie at residues 365 to 386 (NAKLVRELKEEVTRLKDLLRAQ) and 470 to 502 (GEEAIERLKESEKIIAELNETWEEKLRKTEAIR). The 57-residue stretch at 556 to 612 (TRVGQADAERRQDIVLSGAHIKEEHCLFRSERSNTGEVIVTLEPCERSETYVNGKRV) folds into the FHA domain. Residues Thr-647 and Thr-652 each carry the phosphothreonine modification. Coiled-coil stretches lie at residues 668–737 (EKQG…EEEV) and 841–869 (SLDKLKQRLDLMREMYDRAGEVASSAQDD). 5 positions are modified to phosphoserine: Ser-1054, Ser-1057, Ser-1416, Ser-1454, and Ser-1487. Residues 1522 to 1571 (VPKSLSDSLSPSLSSGTLSTSTSISSQISTTTFESAITPSESSGYDSADV) are disordered. Residues 1525–1553 (SLSDSLSPSLSSGTLSTSTSISSQISTTT) show a composition bias toward low complexity. Residues 1554–1566 (FESAITPSESSGY) show a composition bias toward polar residues. Residues Ser-1573, Ser-1603, Ser-1610, and Ser-1613 each carry the phosphoserine modification. Positions 1620 to 1637 (SVSSFSSSTLTPSSTCPS) are enriched in low complexity. The tract at residues 1620 to 1659 (SVSSFSSSTLTPSSTCPSLVDSRSSSMDQKTPEANSRASS) is disordered. Over residues 1640 to 1659 (DSRSSSMDQKTPEANSRASS) the composition is skewed to polar residues. Positions 1702 to 1799 (VSKKGYLHFK…WLYAFNPLLA (98 aa)) constitute a PH domain.

The protein belongs to the TRAFAC class myosin-kinesin ATPase superfamily. Kinesin family. Unc-104 subfamily. Monomer. Interacts with KIFBP; positively regulates KIF1B microtubule motor activity. Interacts (via C-terminus end of the kinesin-motor domain) with CHP1; the interaction occurs in a calcium-dependent manner. In terms of assembly, interacts with MADD (via death domain); links this isoform to Rab3-carrying vesicles in anterograde synaptic vesicle transport. Expressed in the brain (at protein level).

The protein localises to the cytoplasm. The protein resides in the cytoskeleton. It localises to the cytoplasmic vesicle. Its subcellular location is the secretory vesicle. It is found in the synaptic vesicle membrane. The protein localises to the mitochondrion. The catalysed reaction is ATP + H2O + a kinesin associated with a microtubule at position (n) = ADP + phosphate a kinesin associated with a microtubule at position (n+1, toward the plus end).. Has a plus-end-directed microtubule motor activity and functions as a motor for transport of vesicles and organelles along microtubules. In terms of biological role, has a plus-end-directed microtubule motor activity and functions as a motor for anterograde synaptic vesicle transport along axonal microtubules from the cell body to the presynapse in neuronal cells. Functions as a downstream effector in a developmental apoptotic pathway that is activated when nerve growth factor (NGF) becomes limiting for neuronal progenitor cells. Its function is as follows. Has a plus-end-directed microtubule motor activity and functions as a motor for anterograde transport of mitochondria. The chain is Kinesin-like protein KIF1B from Mus musculus (Mouse).